The primary structure comprises 552 residues: MTSLREFRKLCCDIYHASGYKEKSKLIRDFITDRDDKYLIIKLLLPGLDDRIYNMNDKQIIKLYSIIFKQSQEDMLQDLGYGYIGDTIRTFFKENTEIRPRDKSILTLEEVDSFLTTLSSVTKESHQIKLLTDIASVCTCNDLKCVVMLIDKDLKIKAGPRYVLNAISPHAYDVFRKSNNLKEIIENASKQNLDSISISVMTPINPMLAESCDSVNKAFKKFPSGMFAEVKYDGERVQVHKNNNEFAFFSRNMKPVLSHKVDYLKEYIPKAFKKATSIVLDSEIVLVDEHNVPLPFGSLGIHKKKEYKNSNMCLFVFDCLYFDGFDMTDIPLYERRSFLKDVMVEIPNRIVFSELTNISNESQLTDVLDDALTRKLEGLVLKDINGVYEPGKRRWLKIKRDYLNEGSMADSADLVVLGAYYGKGAKGGIMAVFLMGCYDDESGKWKTVTKCSGHDDNTLRELQDQLKMIKINKDPKKIPEWLVVNKIYIPDFVVEDPKQSQIWEISGAEFTSSKSHTANGISIRFPRFTRIREDKTWKESTHLNDLVNLTKS.

Residue glutamate 229 participates in ATP binding. The active-site N6-AMP-lysine intermediate is the lysine 231. The ATP site is built by arginine 236 and glutamate 283. Mg(2+) is bound by residues glutamate 283 and glutamate 377. Residues lysine 382 and lysine 397 each contribute to the ATP site.

This sequence belongs to the ATP-dependent DNA ligase family. As to quaternary structure, interacts with host TOP2A and TOP2B. The cofactor is Mg(2+).

Its subcellular location is the host cytoplasm. It catalyses the reaction ATP + (deoxyribonucleotide)n-3'-hydroxyl + 5'-phospho-(deoxyribonucleotide)m = (deoxyribonucleotide)n+m + AMP + diphosphate.. Its function is as follows. DNA ligase that seals nicks in double-stranded DNA during DNA replication, DNA recombination and DNA repair. Recruits cellular topoisomerase II to sites of viral replication and assembly. This Vaccinia virus (strain Ankara) (VACV) protein is DNA ligase (OPG180).